Here is a 196-residue protein sequence, read N- to C-terminus: ATP-dependent Clp protease proteolytic subunit (196 aa).

The active-site Nucleophile is the serine 96. The active site involves histidine 121.

The protein belongs to the peptidase S14 family. In terms of assembly, fourteen ClpP subunits assemble into 2 heptameric rings which stack back to back to give a disk-like structure with a central cavity, resembling the structure of eukaryotic proteasomes.

It localises to the cytoplasm. It catalyses the reaction Hydrolysis of proteins to small peptides in the presence of ATP and magnesium. alpha-casein is the usual test substrate. In the absence of ATP, only oligopeptides shorter than five residues are hydrolyzed (such as succinyl-Leu-Tyr-|-NHMec, and Leu-Tyr-Leu-|-Tyr-Trp, in which cleavage of the -Tyr-|-Leu- and -Tyr-|-Trp bonds also occurs).. In terms of biological role, cleaves peptides in various proteins in a process that requires ATP hydrolysis. Has a chymotrypsin-like activity. Plays a major role in the degradation of misfolded proteins. The protein is ATP-dependent Clp protease proteolytic subunit of Streptococcus mutans serotype c (strain ATCC 700610 / UA159).